Consider the following 238-residue polypeptide: tRNA (guanine-N(7)-)-methyltransferase (238 aa).

S-adenosyl-L-methionine is bound by residues E68, E93, D120, and D143. D143 is a catalytic residue. Substrate-binding positions include K147, D179, and 216 to 219; that span reads TKFE.

Belongs to the class I-like SAM-binding methyltransferase superfamily. TrmB family.

It carries out the reaction guanosine(46) in tRNA + S-adenosyl-L-methionine = N(7)-methylguanosine(46) in tRNA + S-adenosyl-L-homocysteine. Its pathway is tRNA modification; N(7)-methylguanine-tRNA biosynthesis. Catalyzes the formation of N(7)-methylguanine at position 46 (m7G46) in tRNA. The protein is tRNA (guanine-N(7)-)-methyltransferase of Aliivibrio salmonicida (strain LFI1238) (Vibrio salmonicida (strain LFI1238)).